The chain runs to 521 residues: Beta-glucosidase 6 (521 aa).

An N-terminal signal peptide occupies residues Met-1–Ala-38. A beta-D-glucoside contacts are provided by residues Gln-64, His-165, and Asn-210–Glu-211. The Proton donor role is filled by Glu-211. A disulfide bridge connects residues Cys-230 and Cys-238. N-linked (GlcNAc...) asparagine glycosylation occurs at Asn-291. Tyr-354 provides a ligand contact to a beta-D-glucoside. N-linked (GlcNAc...) asparagine glycosylation is found at Asn-362 and Asn-372. A beta-D-glucoside contacts are provided by residues Glu-427, Trp-477, Glu-484 to Trp-485, and Phe-493. The active-site Nucleophile is the Glu-427.

It belongs to the glycosyl hydrolase 1 family. As to quaternary structure, homodimer.

It is found in the secreted. It catalyses the reaction Hydrolysis of terminal, non-reducing beta-D-glucosyl residues with release of beta-D-glucose.. Its function is as follows. Hydrolyzes glycosides, oligosaccharides and hydrophobic glycosides. Possesses gibberellin ester beta-D-glucosidase activity. Can hydrolyze gibberellin A4 beta-D-glucosyl ester in vitro. This chain is Beta-glucosidase 6, found in Oryza sativa subsp. japonica (Rice).